A 397-amino-acid chain; its full sequence is MLYYFNTLAMMLRMQRVESCHTEEYGDEPEAIAVVPGRFHLLGEYLWFAQGNTLSMAIDQTLTLCVSRRKDSTFRLFSLTLGERRKISTANLRYRKEDRWANSVKAVILSFMDGGYHLTGLNCTILSQIPPDAGLGTPNALKVAMALVLGRLFAATLPKESVVSIVEHANERYLKTHAHRADILCVLFAKQGSCVRTDHRKKQAELCQFPSEGKRIVLTDSRVPRFIAREEFTARLKRCVDAYELVKRNPDMPRAMSKLMAAALEEIDVPEGIRRRVISLVRESLGVDEAIEALRKRDFAAFSRVVNRSHERLRDRFEISCPELDWLVKRALEFVDPDAPDVVCSRLTGRGFGGCTYAILRDQDFEPYLERLDEYERIFGFKAAAYEVQCSEGARVL.

Serine 78 is a binding site for ATP. Aspartate 182 acts as the Proton acceptor in catalysis.

Belongs to the GHMP kinase family. GalK subfamily.

It localises to the cytoplasm. The catalysed reaction is alpha-D-galactose + ATP = alpha-D-galactose 1-phosphate + ADP + H(+). It functions in the pathway carbohydrate metabolism; galactose metabolism. Functionally, catalyzes the transfer of the gamma-phosphate of ATP to D-galactose to form alpha-D-galactose-1-phosphate (Gal-1-P). The protein is Putative galactokinase (galK) of Treponema pallidum (strain Nichols).